Here is a 225-residue protein sequence, read N- to C-terminus: Glutathione S-transferase A (225 aa).

Residues 3–85 (KDMTLLWGSG…YLESQFKSQG (83 aa)) enclose the GST N-terminal domain. Arginine 18 contributes to the glutathione binding site. The GST C-terminal domain maps to 92–217 (CPAEQAMMYQ…WPPTWLESPQ (126 aa)).

This sequence belongs to the GST superfamily. Theta family. Homodimer. In terms of tissue distribution, found in all the tissues examined. Highest values found in liver and in intestinal mucosa.

Its subcellular location is the cytoplasm. It carries out the reaction RX + glutathione = an S-substituted glutathione + a halide anion + H(+). Its function is as follows. Conjugation of reduced glutathione to a wide number of exogenous and endogenous hydrophobic electrophiles. This Pleuronectes platessa (European plaice) protein is Glutathione S-transferase A.